The following is a 136-amino-acid chain: UPF0299 membrane protein PM0880 (136 aa).

Helical transmembrane passes span 5 to 25 (IVDL…GEWI), 29 to 49 (LNIG…GLTF), 67 to 87 (YMAL…DVLF), and 92 to 112 (VLLL…GLLS).

It belongs to the UPF0299 family.

It localises to the cell inner membrane. The chain is UPF0299 membrane protein PM0880 from Pasteurella multocida (strain Pm70).